We begin with the raw amino-acid sequence, 602 residues long: Cholinesterase (602 aa).

The N-terminal stretch at 1–28 (MHSKVTIICIRFLFWFLLLCMLIGKSHT) is a signal peptide. Asparagine 45 and asparagine 85 each carry an N-linked (GlcNAc...) (complex) asparagine glycan. A disulfide bond links cysteine 93 and cysteine 120. Tacrine is bound at residue tryptophan 110. N-linked (GlcNAc...) (complex) asparagine glycosylation is present at asparagine 134. 144-145 (GG) is a substrate binding site. Serine 226 (acyl-ester intermediate) is an active-site residue. Position 226 is a phosphoserine (serine 226). 2 N-linked (GlcNAc...) (complex) asparagine glycosylation sites follow: asparagine 269 and asparagine 284. Residues cysteine 280 and cysteine 291 are joined by a disulfide bond. Glutamate 353 (charge relay system) is an active-site residue. Asparagine 369 carries an N-linked (GlcNAc...) (complex) asparagine glycan. Cysteines 428 and 547 form a disulfide. A tacrine-binding site is contributed by histidine 466. The active-site Charge relay system is the histidine 466. A glycan (N-linked (GlcNAc...) (complex) asparagine) is linked at asparagine 483. N-linked (GlcNAc...) asparagine glycosylation is found at asparagine 509, asparagine 513, and asparagine 514.

The protein belongs to the type-B carboxylesterase/lipase family. In terms of assembly, homotetramer; disulfide-linked. Dimer of dimers. In terms of processing, N-glycosylated. No other PTM detected. The major N-glycan structures are of the complex diantennary type with 1 and 2 N-acetylneuraminic acid molecules (Neu5Ac) making up approximately 33% and 47% of the total N-glycans, respectively. Only low amounts of fucosylated diantennary N-glycans are detected (approximately 2%). Triantennary N-glycans with or without fucose amount to approximately 13%, whereas 5% of the total N-glycans are of the oligomannosidic or hybrid type. As to expression, detected in blood plasma (at protein level). Present in most cells except erythrocytes.

Its subcellular location is the secreted. The catalysed reaction is an acylcholine + H2O = a carboxylate + choline + H(+). Inhibited by mercury. Inhibited by Tabun. Tabun forms a covalent adduct with Ser-226 that becomes irreversible upon aging. Functionally, esterase with broad substrate specificity. Contributes to the inactivation of the neurotransmitter acetylcholine. Can degrade neurotoxic organophosphate esters. In Homo sapiens (Human), this protein is Cholinesterase (BCHE).